Here is a 483-residue protein sequence, read N- to C-terminus: Glutamyl-tRNA(Gln) amidotransferase subunit A (483 aa).

Active-site charge relay system residues include Lys76 and Ser151. Ser175 (acyl-ester intermediate) is an active-site residue.

This sequence belongs to the amidase family. GatA subfamily. As to quaternary structure, heterotrimer of A, B and C subunits.

It catalyses the reaction L-glutamyl-tRNA(Gln) + L-glutamine + ATP + H2O = L-glutaminyl-tRNA(Gln) + L-glutamate + ADP + phosphate + H(+). Its function is as follows. Allows the formation of correctly charged Gln-tRNA(Gln) through the transamidation of misacylated Glu-tRNA(Gln) in organisms which lack glutaminyl-tRNA synthetase. The reaction takes place in the presence of glutamine and ATP through an activated gamma-phospho-Glu-tRNA(Gln). In Pseudomonas putida (strain W619), this protein is Glutamyl-tRNA(Gln) amidotransferase subunit A.